The sequence spans 126 residues: Fluoride-specific ion channel FluC (126 aa).

The next 4 membrane-spanning stretches (helical) occupy residues 4-24 (YLYI…VSGV), 35-55 (IGTF…TGLF), 67-87 (LLIL…MFES), and 100-120 (ALNI…GLAL). Na(+) is bound by residues Gly75 and Thr78.

This sequence belongs to the fluoride channel Fluc/FEX (TC 1.A.43) family.

Its subcellular location is the cell inner membrane. The catalysed reaction is fluoride(in) = fluoride(out). Its activity is regulated as follows. Na(+) is not transported, but it plays an essential structural role and its presence is essential for fluoride channel function. In terms of biological role, fluoride-specific ion channel. Important for reducing fluoride concentration in the cell, thus reducing its toxicity. This is Fluoride-specific ion channel FluC from Maridesulfovibrio salexigens (strain ATCC 14822 / DSM 2638 / NCIMB 8403 / VKM B-1763) (Desulfovibrio salexigens).